A 335-amino-acid polypeptide reads, in one-letter code: Tetraacyldisaccharide 4'-kinase (335 aa).

58–65 (TVGGSGKT) is an ATP binding site.

The protein belongs to the LpxK family.

It carries out the reaction a lipid A disaccharide + ATP = a lipid IVA + ADP + H(+). It functions in the pathway glycolipid biosynthesis; lipid IV(A) biosynthesis; lipid IV(A) from (3R)-3-hydroxytetradecanoyl-[acyl-carrier-protein] and UDP-N-acetyl-alpha-D-glucosamine: step 6/6. Functionally, transfers the gamma-phosphate of ATP to the 4'-position of a tetraacyldisaccharide 1-phosphate intermediate (termed DS-1-P) to form tetraacyldisaccharide 1,4'-bis-phosphate (lipid IVA). This chain is Tetraacyldisaccharide 4'-kinase, found in Shewanella sp. (strain ANA-3).